The following is a 650-amino-acid chain: Glycoprotein 105 (650 aa).

Residues 1–32 (MATARLGVMRPPRSCALIFLCAFSMATAPTNA) form a helical; Signal-anchor for type II membrane protein membrane-spanning segment. The Virion surface portion of the chain corresponds to 33-650 (TAHRRAGTVK…RFPHVGIGSY (618 aa)). 8 N-linked (GlcNAc...) asparagine; by host glycosylation sites follow: N52, N290, N332, N338, N359, N422, N516, and N552.

Associates with the gp82-gp105 complex. N-Glycosylated.

It is found in the virion membrane. The polypeptide is Glycoprotein 105 (U96/U97/U98/U99/U100) (Homo sapiens (Human)).